A 275-amino-acid polypeptide reads, in one-letter code: Large ribosomal subunit protein uL2 (275 aa).

The segment at 224–275 is disordered; the sequence is VMNPVDHPHGGGEGKSPIGRPSPVTPWGKPTLGYKTRKKNKASDKFIIKRRK. Positions 264–275 are enriched in basic and acidic residues; sequence KASDKFIIKRRK.

This sequence belongs to the universal ribosomal protein uL2 family. As to quaternary structure, part of the 50S ribosomal subunit. Forms a bridge to the 30S subunit in the 70S ribosome.

One of the primary rRNA binding proteins. Required for association of the 30S and 50S subunits to form the 70S ribosome, for tRNA binding and peptide bond formation. It has been suggested to have peptidyltransferase activity; this is somewhat controversial. Makes several contacts with the 16S rRNA in the 70S ribosome. The chain is Large ribosomal subunit protein uL2 from Acetivibrio thermocellus (strain ATCC 27405 / DSM 1237 / JCM 9322 / NBRC 103400 / NCIMB 10682 / NRRL B-4536 / VPI 7372) (Clostridium thermocellum).